A 236-amino-acid chain; its full sequence is Venom metalloproteinase antarease-like TfasMP_A (236 aa).

The Peptidase M12B domain maps to 4–232; the sequence is IVVEYYIVTD…KPAASCIFEQ (229 aa). His-161 serves as a coordination point for Zn(2+). Glu-162 is an active-site residue. Residues His-165 and His-171 each coordinate Zn(2+).

This sequence belongs to the venom metalloproteinase (M12B) family. Requires Zn(2+) as cofactor. Post-translationally, contains several disulfide bonds. As to expression, expressed by the venom gland.

Its subcellular location is the secreted. Its activity is regulated as follows. Inhibited by EDTA. In terms of biological role, acts as a metalloprotease. Penetrates intact tissue and specifically cleaves the vesicle-associated membrane protein 2 (VAMP2) (part of the SNARE complex) involved in pancreatic secretion, thus disrupting the normal vesicular traffic. The protein is Venom metalloproteinase antarease-like TfasMP_A of Tityus fasciolatus (Central Brazilian scorpion).